The sequence spans 515 residues: Bifunctional purine biosynthesis protein PurH (515 aa).

Residues 1–145 (MTKRVLISVS…KNHASVTVVV (145 aa)) enclose the MGS-like domain.

Belongs to the PurH family.

The enzyme catalyses (6R)-10-formyltetrahydrofolate + 5-amino-1-(5-phospho-beta-D-ribosyl)imidazole-4-carboxamide = 5-formamido-1-(5-phospho-D-ribosyl)imidazole-4-carboxamide + (6S)-5,6,7,8-tetrahydrofolate. It carries out the reaction IMP + H2O = 5-formamido-1-(5-phospho-D-ribosyl)imidazole-4-carboxamide. It participates in purine metabolism; IMP biosynthesis via de novo pathway; 5-formamido-1-(5-phospho-D-ribosyl)imidazole-4-carboxamide from 5-amino-1-(5-phospho-D-ribosyl)imidazole-4-carboxamide (10-formyl THF route): step 1/1. It functions in the pathway purine metabolism; IMP biosynthesis via de novo pathway; IMP from 5-formamido-1-(5-phospho-D-ribosyl)imidazole-4-carboxamide: step 1/1. The sequence is that of Bifunctional purine biosynthesis protein PurH from Streptococcus pneumoniae (strain 70585).